A 102-amino-acid polypeptide reads, in one-letter code: Beta-defensin 116 (102 aa).

The signal sequence occupies residues 1–23 (MSVMKPCLMTIAILMILAQKTPG). Disulfide bonds link Cys-40-Cys-67, Cys-47-Cys-61, and Cys-51-Cys-68. The disordered stretch occupies residues 83–102 (EDYDSNSNLSVTNSSSYSHI). Low complexity predominate over residues 87 to 102 (SNSNLSVTNSSSYSHI).

Belongs to the beta-defensin family.

It is found in the secreted. Its function is as follows. Has antibacterial activity. This is Beta-defensin 116 (DEFB116) from Homo sapiens (Human).